The chain runs to 321 residues: Polygalacturonan/rhamnogalacturonan transport system permease protein YteP (321 aa).

An ABC transmembrane type-1 domain is found at 1–144; that stretch reads MKTAEAQAPA…YIPHFMSWVI (144 aa). A run of 3 helical transmembrane segments spans residues 21–41, 63–83, and 123–143; these read RKRLLIKLIQQKYLYLMILPG, YQPFLGILGSEWVGLKHFIRL, and IALFKKFVQTLIYIPHFMSWV.

Belongs to the binding-protein-dependent transport system permease family. In terms of assembly, the complex is probably composed of two ATP-binding proteins (MsmX), two transmembrane proteins (YtcP and YteP) and a solute-binding protein (YtcQ).

The protein localises to the cell membrane. Involved in pectin degradation. Part of the ABC transporter complex YtcQP-YteP involved in the uptake of polygalacturonan and rhamnogalacturonan type I. Responsible for the translocation of the substrate across the membrane. The chain is Polygalacturonan/rhamnogalacturonan transport system permease protein YteP (yteP) from Bacillus subtilis (strain 168).